Consider the following 177-residue polypeptide: Protein BROTHER of FT and TFL 1 (177 aa).

The protein belongs to the phosphatidylethanolamine-binding protein family.

The protein localises to the cytoplasm. In terms of biological role, may form complexes with phosphorylated ligands by interfering with kinases and their effectors. This Arabidopsis thaliana (Mouse-ear cress) protein is Protein BROTHER of FT and TFL 1 (BFT).